A 233-amino-acid polypeptide reads, in one-letter code: MNYSLIQISDCHIDDNKYSMGVNTHINLKKIISRISHINIDVLLITGDLTHKGSITSYKALQQMLYPIQIKLLIIPGNHDNKNNLSATFSKNLFSQFTLGKWEIININSVQVSKTSGFLTKDELIKLELNLAQSIAQYILITLHHPTVPMNSTWDDSLSLENPEALFNVLDKYHKIQAILFGHAHQAAEFKRLGVKIISCPSTALQFNNETRIGFNYYTLYDNGQLTINTQWI.

7 residues coordinate Fe cation: D10, H12, D48, N78, H144, H183, and H185. AMP is bound by residues H12, D48, and 78–79 (NH). H185 is an AMP binding site.

Belongs to the cyclic nucleotide phosphodiesterase class-III family. The cofactor is Fe(2+).

This Vesicomyosocius okutanii subsp. Calyptogena okutanii (strain HA) protein is Probable cyclic nucleotide phosphodiesterase COSY_0614.